We begin with the raw amino-acid sequence, 1164 residues long: DNA-directed RNA polymerase 133 kDa polypeptide (1164 aa).

It belongs to the RNA polymerase beta chain family. As to quaternary structure, the DNA-dependent RNA polymerase used for intermediate and late genes expression consists of eight subunits 147 kDa, 133 kDa, 35 kDa, 30 kDa, 22 kDa, 19 kDa, 18 kDa and 7 kDa totalling more than 500 kDa in mass. The same holoenzyme, with the addition of the transcription-specificity factor RAP94, is used for early gene expression.

It is found in the virion. It carries out the reaction RNA(n) + a ribonucleoside 5'-triphosphate = RNA(n+1) + diphosphate. Its function is as follows. Part of the DNA-dependent RNA polymerase which catalyzes the transcription of viral DNA into RNA using the four ribonucleoside triphosphates as substrates. Responsible for the transcription of early, intermediate and late genes. DNA-dependent RNA polymerase associates with the early transcription factor (ETF), itself composed of OPG118 and OPG133, thereby allowing the early genes transcription. Late transcription, and probably also intermediate transcription, require newly synthesized RNA polymerase. This Homo sapiens (Human) protein is DNA-directed RNA polymerase 133 kDa polypeptide (OPG151).